The following is an 880-amino-acid chain: Alanine--tRNA ligase (880 aa).

Positions 571, 575, 673, and 677 each coordinate Zn(2+).

Belongs to the class-II aminoacyl-tRNA synthetase family. Zn(2+) is required as a cofactor.

The protein resides in the cytoplasm. The catalysed reaction is tRNA(Ala) + L-alanine + ATP = L-alanyl-tRNA(Ala) + AMP + diphosphate. Its function is as follows. Catalyzes the attachment of alanine to tRNA(Ala) in a two-step reaction: alanine is first activated by ATP to form Ala-AMP and then transferred to the acceptor end of tRNA(Ala). Also edits incorrectly charged Ser-tRNA(Ala) and Gly-tRNA(Ala) via its editing domain. The protein is Alanine--tRNA ligase of Oleidesulfovibrio alaskensis (strain ATCC BAA-1058 / DSM 17464 / G20) (Desulfovibrio alaskensis).